Reading from the N-terminus, the 221-residue chain is Thymidylate kinase (221 aa).

11 to 18 (GPDGAGKT) contacts ATP.

The protein belongs to the thymidylate kinase family.

It catalyses the reaction dTMP + ATP = dTDP + ADP. Functionally, phosphorylation of dTMP to form dTDP in both de novo and salvage pathways of dTTP synthesis. The chain is Thymidylate kinase from Lactiplantibacillus plantarum (strain ATCC BAA-793 / NCIMB 8826 / WCFS1) (Lactobacillus plantarum).